Reading from the N-terminus, the 504-residue chain is Glycerol kinase (504 aa).

Threonine 12 contacts ADP. Positions 12, 13, and 14 each coordinate ATP. Sn-glycerol 3-phosphate is bound at residue threonine 12. Arginine 16 contacts ADP. Residues arginine 82, glutamate 83, tyrosine 134, and aspartate 246 each contribute to the sn-glycerol 3-phosphate site. Glycerol-binding residues include arginine 82, glutamate 83, tyrosine 134, aspartate 246, and glutamine 247. Residues threonine 268 and glycine 312 each coordinate ADP. The ATP site is built by threonine 268, glycine 312, glutamine 316, and glycine 413. The ADP site is built by glycine 413 and asparagine 417.

The protein belongs to the FGGY kinase family.

The enzyme catalyses glycerol + ATP = sn-glycerol 3-phosphate + ADP + H(+). It functions in the pathway polyol metabolism; glycerol degradation via glycerol kinase pathway; sn-glycerol 3-phosphate from glycerol: step 1/1. Inhibited by fructose 1,6-bisphosphate (FBP). Functionally, key enzyme in the regulation of glycerol uptake and metabolism. Catalyzes the phosphorylation of glycerol to yield sn-glycerol 3-phosphate. The chain is Glycerol kinase from Pseudarthrobacter chlorophenolicus (strain ATCC 700700 / DSM 12829 / CIP 107037 / JCM 12360 / KCTC 9906 / NCIMB 13794 / A6) (Arthrobacter chlorophenolicus).